The following is a 658-amino-acid chain: Palmitoyltransferase ZDHHC5-B (658 aa).

Residues 1–24 lie on the Cytoplasmic side of the membrane; sequence MPVGLSVGGALGDPSPSRPFRPSR. The chain crosses the membrane as a helical span at residues 25–45; that stretch reads YVPVSAATAFLVGATTLFLCF. Residues 46–56 lie on the Extracellular side of the membrane; the sequence is TCPWLSEKFSS. The helical transmembrane segment at 57–77 threads the bilayer; sequence FIPLYNVVVFLFTLANFCMAT. Topologically, residues 78-159 are cytoplasmic; sequence FMDPGVFPRA…NCIGRRNYRY (82 aa). Residues 115-165 form the DHHC domain; it reads KWCSTCRFYRPPRCSHCSVCDNCVEEFDHHCPWVNNCIGRRNYRYFFLFLL. Residue Cys145 is the S-palmitoyl cysteine intermediate of the active site. Residues 160-180 traverse the membrane as a helical segment; the sequence is FFLFLLSLTVHIMDVFGFSLL. Topologically, residues 181–202 are extracellular; sequence YILHHTKQLDLVQSGVTMAVMC. Residues 203–223 traverse the membrane as a helical segment; sequence VAGLFFVPVAGLTGFHVVLVA. The Cytoplasmic segment spans residues 224–658; it reads RGRTTNEQVT…VGGTTYEISV (435 aa). Disordered stretches follow at residues 306–419, 490–522, and 540–658; these read EIME…RSGS, ESLL…LSTA, and QREG…EISV. Residues 360 to 398 are compositionally biased toward polar residues; that stretch reads PGKNHTASTHSSKMSRGNSMTESPSVPVTTGQPSYRSDP. Gly residues predominate over residues 407–419; it reads GCRGGAEGGRSGS. The span at 565–575 shows a compositional bias: pro residues; sequence SSPPSRAPPLS. Polar residues predominate over residues 619–633; that stretch reads SMPNSTIKQNVANHN. Positions 634–644 are enriched in basic residues; the sequence is THSHKPARGVK.

The protein belongs to the DHHC palmitoyltransferase family. ERF2/ZDHHC9 subfamily.

It localises to the cell membrane. It catalyses the reaction L-cysteinyl-[protein] + hexadecanoyl-CoA = S-hexadecanoyl-L-cysteinyl-[protein] + CoA. Palmitoyltransferase that catalyzes the addition of palmitate onto various protein substrates and is involved in a variety of cellular processes. The chain is Palmitoyltransferase ZDHHC5-B from Danio rerio (Zebrafish).